The following is a 440-amino-acid chain: Oligodendrocyte-myelin glycoprotein (440 aa).

A signal peptide spans 1–24 (MEYQILKMSSCLFILLFLTPGILC). One can recognise an LRRNT domain in the interval 25 to 55 (ICPLQCTCTERHRHVDCSGRNLTTLPPGLQE). 2 N-linked (GlcNAc...) asparagine glycosylation sites follow: Asn45 and Asn61. LRR repeat units follow at residues 56 to 78 (NIIH…TPYT), 79 to 100 (NLRT…LPRS), 101 to 121 (LWNM…DTAY), 124 to 145 (NLKY…KNTL), 147 to 168 (SLEV…MPSK), 169 to 189 (LHIV…TLIN), 192 to 213 (NLTH…SFDQ), and 216 to 239 (QLQE…TYLL). N-linked (GlcNAc...) asparagine glycosylation is present at Asn103. N-linked (GlcNAc...) asparagine glycosylation is found at Asn152, Asn176, Asn189, Asn192, and Asn234. Ser/Thr-rich repeat units lie at residues 229-270 (CDHK…YPTP), 271-292 (PGFT…INSL), 293-335 (SMVT…VAYP), 336-377 (EDTP…PPSP), and 378-416 (VTLS…TRPP). 2 N-linked (GlcNAc...) asparagine glycosylation sites follow: Asn364 and Asn389. Residue Ser417 is the site of GPI-anchor amidated serine attachment. Residues 418 to 440 (AASAWKVNASLLLMLNAVVMLAG) constitute a propeptide, removed in mature form. Asn425 is a glycosylation site (N-linked (GlcNAc...) asparagine).

In terms of assembly, binds to RTN4R. O-glycosylated in its Ser/Thr-rich repeat domain. As to expression, oligodendrocytes and myelin of the central nervous system.

The protein localises to the cell membrane. In terms of biological role, cell adhesion molecule contributing to the interactive process required for myelination in the central nervous system. This chain is Oligodendrocyte-myelin glycoprotein (Omg), found in Mus musculus (Mouse).